A 252-amino-acid chain; its full sequence is FKBP-type peptidyl-prolyl cis-trans isomerase FkpA (252 aa).

A PPIase FKBP-type domain is found at N165–I252.

The protein belongs to the FKBP-type PPIase family.

The enzyme catalyses [protein]-peptidylproline (omega=180) = [protein]-peptidylproline (omega=0). In terms of biological role, PPIases accelerate the folding of proteins. It catalyzes the cis-trans isomerization of proline imidic peptide bonds in oligopeptides. The sequence is that of FKBP-type peptidyl-prolyl cis-trans isomerase FkpA (fkpA) from Buchnera aphidicola subsp. Schizaphis graminum (strain Sg).